The sequence spans 136 residues: MQPKKTKFRKAHKGRIHGVASSGATLAFGQYGLKATEPERVTARQIEAARRALTRHMKRAGRVWIRVFPDLPVSKKPAEVRMGSGKGSPELWVARVKPGRVLFEIDGVNTQTAREALTLAAAKLPIKTRFVERIAE.

The protein belongs to the universal ribosomal protein uL16 family. In terms of assembly, part of the 50S ribosomal subunit.

In terms of biological role, binds 23S rRNA and is also seen to make contacts with the A and possibly P site tRNAs. This is Large ribosomal subunit protein uL16 from Bradyrhizobium diazoefficiens (strain JCM 10833 / BCRC 13528 / IAM 13628 / NBRC 14792 / USDA 110).